The primary structure comprises 469 residues: Dihydrolipoyl dehydrogenase (469 aa).

FAD is bound by residues 34 to 42 (EKQYWGGVC), Lys-51, and Gly-114. A disulfide bridge links Cys-42 with Cys-47. Residues 179–183 (GAGAI), Glu-202, and 269–272 (SVGF) each bind NAD(+). FAD contacts are provided by Asp-312 and Ala-320. The active-site Proton acceptor is His-448.

The protein belongs to the class-I pyridine nucleotide-disulfide oxidoreductase family. As to quaternary structure, homodimer. Part of an unusual ODH/PDH supercomplex, consisting of AceE (E1), AceF (E2), and Lpd (E3) together with OdhA (E1+E2). FAD is required as a cofactor.

It localises to the cytoplasm. It carries out the reaction N(6)-[(R)-dihydrolipoyl]-L-lysyl-[protein] + NAD(+) = N(6)-[(R)-lipoyl]-L-lysyl-[protein] + NADH + H(+). It functions in the pathway carbohydrate metabolism; tricarboxylic acid cycle; succinyl-CoA from 2-oxoglutarate (dehydrogenase route): step 1/1. Its function is as follows. Lipoamide dehydrogenase is an essential component of the pyruvate dehydrogenase (PDH) and 2-oxoglutarate dehydrogenase (ODH) complexes. Catalyzes the reoxidation of dihydrolipoyl groups which are covalently attached to the lipoate acyltransferase components (E2) of the complexes. Also catalyzes a reversible NADH:NAD(+) transhydrogenation, and is able to transfer electrons from NADH to various redox-active compounds and quinones. May be involved in quinone redox cycling in C.glutamicum. The polypeptide is Dihydrolipoyl dehydrogenase (lpd) (Corynebacterium glutamicum (strain ATCC 13032 / DSM 20300 / JCM 1318 / BCRC 11384 / CCUG 27702 / LMG 3730 / NBRC 12168 / NCIMB 10025 / NRRL B-2784 / 534)).